Reading from the N-terminus, the 61-residue chain is Cytotoxin 1 (61 aa).

4 cysteine pairs are disulfide-bonded: Cys3/Cys22, Cys15/Cys39, Cys43/Cys54, and Cys55/Cys60.

It belongs to the three-finger toxin family. Short-chain subfamily. Type IB cytotoxin sub-subfamily. As to expression, expressed by the venom gland.

The protein resides in the secreted. Functionally, this protein lyses red blood cells and has cardiotoxic and hypotensive activities. In Hemachatus haemachatus (Rinkhals), this protein is Cytotoxin 1.